A 248-amino-acid chain; its full sequence is 2,3-bisphosphoglycerate-dependent phosphoglycerate mutase (248 aa).

Substrate-binding positions include 8–15 (RHGESIWN), 21–22 (TG), R60, 87–90 (EKHY), K98, 114–115 (RR), and 183–184 (GN). The Tele-phosphohistidine intermediate role is filled by H9. E87 acts as the Proton donor/acceptor in catalysis.

This sequence belongs to the phosphoglycerate mutase family. BPG-dependent PGAM subfamily.

It carries out the reaction (2R)-2-phosphoglycerate = (2R)-3-phosphoglycerate. The protein operates within carbohydrate degradation; glycolysis; pyruvate from D-glyceraldehyde 3-phosphate: step 3/5. Functionally, catalyzes the interconversion of 2-phosphoglycerate and 3-phosphoglycerate. This chain is 2,3-bisphosphoglycerate-dependent phosphoglycerate mutase, found in Parabacteroides distasonis (strain ATCC 8503 / DSM 20701 / CIP 104284 / JCM 5825 / NCTC 11152).